The sequence spans 578 residues: Endonuclease GajA (578 aa).

Residues 1–341 (MKFSNITIKN…RLIRVHSTEK (341 aa)) are ATPase domain. Residue 32-36 (DIGKT) participates in ATP binding. The interval 370–510 (LFAERVLLIE…LGERIYLSEI (141 aa)) is toprim domain. Residues Glu379, Glu383, Asp463, Glu464, and Glu513 each coordinate a divalent metal cation.

As to quaternary structure, homotetramer. Forms the core of the anti-phage defense complex. Interacts with GajB; 2 GajB dimers dock at opposite sides of the GajA complex to form a 4:4 GajA-GajB assembly (GajAB). GajAB interacts with Bacillus phage Phi3T Gad1 protein; this interaction forms a 4:4:8 GajAB-Gad1 complex and leads to GajAB inhibition. Mg(2+) serves as cofactor. The cofactor is Mn(2+).

With respect to regulation, endonuclease activity inhibited by all NTPs, dNTPs, NDPs (at 0.5 mM, UDP not tested) and AMP-PNP; not inhibited by any tested NMP, dNMP or nucleoside. Inhibited by 100 mM NaCl, 100 mM KCl, 0.5 mM Co(2+) and 0.5 mM Ni(2+). Functionally, component of antiviral defense system Gabija type I, composed of GajA and GajB. Endonuclease that nicks double-stranded DNA within the sequence 5'-TNNNCGGGNNA-3' in the absence of nucleotides (NTP, dNTP and NDPs), cleaving after C-1. Has no detected ATPase activity. Expression of Gabija type I in B.subtilis (strain BEST7003) confers resistance to phages phi105, phi29, rho14, SpBeta and SBSphiC. Expression of Gabija type I in E.coli B (strain ATCC 11303) confers resistance to phage T7. It is thought that this enzyme is strongly suppressed during physiological growth (in E.coli total nucleotide concentration is over 8.7 mM in mid-log phase), but during viral replication, when nucleotides are rapidly consumed, it is de-suppressed and degrades target DNA. This chain is Endonuclease GajA, found in Bacillus cereus (strain VD045).